Consider the following 394-residue polypeptide: Serine palmitoyltransferase (394 aa).

Residues 111-112 (GF), S183, H211, and T239 each bind pyridoxal 5'-phosphate. K242 is modified (N6-(pyridoxal phosphate)lysine).

It belongs to the class-II pyridoxal-phosphate-dependent aminotransferase family. Requires pyridoxal 5'-phosphate as cofactor.

It carries out the reaction L-serine + hexadecanoyl-CoA + H(+) = 3-oxosphinganine + CO2 + CoA. It functions in the pathway lipid metabolism; sphingolipid metabolism. Its function is as follows. Involved in de novo bacterial ceramide synthesis. Catalyzes the condensation of L-serine with palmitoyl-CoA (hexadecanoyl-CoA) to produce 3-oxosphinganine. Also capable of using alanine as substrate leading to the formation of 1-deoxysphinganine (1-deoxySa). Contributes to the levels of endogenous sphingolipids in its host. The polypeptide is Serine palmitoyltransferase (Bacteroides ovatus (strain ATCC 8483 / DSM 1896 / JCM 5824 / BCRC 10623 / CCUG 4943 / NCTC 11153)).